Consider the following 93-residue polypeptide: DNA-directed RNA polymerase subunit omega (93 aa).

The protein belongs to the RNA polymerase subunit omega family. In terms of assembly, the RNAP catalytic core consists of 2 alpha, 1 beta, 1 beta' and 1 omega subunit. When a sigma factor is associated with the core the holoenzyme is formed, which can initiate transcription.

The catalysed reaction is RNA(n) + a ribonucleoside 5'-triphosphate = RNA(n+1) + diphosphate. In terms of biological role, promotes RNA polymerase assembly. Latches the N- and C-terminal regions of the beta' subunit thereby facilitating its interaction with the beta and alpha subunits. This chain is DNA-directed RNA polymerase subunit omega, found in Corynebacterium urealyticum (strain ATCC 43042 / DSM 7109).